A 390-amino-acid chain; its full sequence is Phosphopentomutase (390 aa).

Residues D14, D286, H291, D327, H328, and H339 each contribute to the Mn(2+) site.

It belongs to the phosphopentomutase family. The cofactor is Mn(2+).

Its subcellular location is the cytoplasm. The catalysed reaction is 2-deoxy-alpha-D-ribose 1-phosphate = 2-deoxy-D-ribose 5-phosphate. The enzyme catalyses alpha-D-ribose 1-phosphate = D-ribose 5-phosphate. The protein operates within carbohydrate degradation; 2-deoxy-D-ribose 1-phosphate degradation; D-glyceraldehyde 3-phosphate and acetaldehyde from 2-deoxy-alpha-D-ribose 1-phosphate: step 1/2. In terms of biological role, isomerase that catalyzes the conversion of deoxy-ribose 1-phosphate (dRib-1-P) and ribose 1-phosphate (Rib-1-P) to deoxy-ribose 5-phosphate (dRib-5-P) and ribose 5-phosphate (Rib-5-P), respectively. This is Phosphopentomutase from Exiguobacterium sibiricum (strain DSM 17290 / CCUG 55495 / CIP 109462 / JCM 13490 / 255-15).